A 208-amino-acid chain; its full sequence is Pyrrolidone-carboxylate peptidase (208 aa).

Active-site residues include Glu-79, Cys-142, and His-166.

This sequence belongs to the peptidase C15 family. As to quaternary structure, homotetramer made of two disulfide-linked dimers.

The protein resides in the cytoplasm. The enzyme catalyses Release of an N-terminal pyroglutamyl group from a polypeptide, the second amino acid generally not being Pro.. Removes 5-oxoproline from various penultimate amino acid residues except L-proline. The polypeptide is Pyrrolidone-carboxylate peptidase (pcp) (Pyrococcus furiosus (strain ATCC 43587 / DSM 3638 / JCM 8422 / Vc1)).